The primary structure comprises 1020 residues: C2 and GRAM domain-containing protein At1g03370 (1020 aa).

Residues 1–102 (MKLQVRVVEA…ENQSLGTVWY (102 aa)) form the C2 1 domain. 5 residues coordinate Ca(2+): aspartate 17, aspartate 23, aspartate 69, aspartate 71, and aspartate 77. 2 stretches are compositionally biased toward polar residues: residues 134–144 (TSSGDQTSASR) and 158–172 (TCASPSRSDDASSIP). The interval 134–172 (TSSGDQTSASRSPDLRLESPIDPSTCASPSRSDDASSIP) is disordered. The VASt 1 domain maps to 249 to 421 (SGGVVVDQLF…LLAQSVKPVD (173 aa)). Residues 454–474 (FTVLSTFLIGIYVFVHIVFAI) traverse the membrane as a helical segment. The region spanning 517-635 (QARKQKGSDH…NISDLADVWV (119 aa)) is the C2 2 domain. Ca(2+)-binding residues include aspartate 551, aspartate 557, aspartate 604, phenylalanine 605, and aspartate 606. Residues 689–752 (AFQKLFGLPQ…LWEDIEEIQV (64 aa)) form the GRAM domain. In terms of domain architecture, VASt 2 spans 848-1010 (RFSEVFSLTL…MTFGFLEKEY (163 aa)).

Ca(2+) is required as a cofactor.

The protein localises to the membrane. The chain is C2 and GRAM domain-containing protein At1g03370 from Arabidopsis thaliana (Mouse-ear cress).